A 110-amino-acid chain; its full sequence is Integration host factor subunit beta (110 aa).

It belongs to the bacterial histone-like protein family. Heterodimer of an alpha and a beta chain.

This protein is one of the two subunits of integration host factor, a specific DNA-binding protein that functions in genetic recombination as well as in transcriptional and translational control. This Parvibaculum lavamentivorans (strain DS-1 / DSM 13023 / NCIMB 13966) protein is Integration host factor subunit beta.